The sequence spans 288 residues: Aquaporin PIP 1-3 (288 aa).

The disordered stretch occupies residues 1-30 (MEGKEEDVRLGANRYTERQPIGTAAQGAEE). Transmembrane regions (helical) follow at residues 57–77 (IAEFVATFLFLYISILTVMGV) and 92–114 (IAWSFGGMIFALVYCTAGISGGH). An NPA 1 motif is present at residues 116 to 118 (NPA). Transmembrane regions (helical) follow at residues 135 to 155 (VFYMAMQCLGAICGAGVVKGF), 177 to 197 (GDGLGAEIVGTFVLVYTVFSA), and 211 to 231 (ILAPLPIGFAVFLVHLATIPI). The NPA 2 signature appears at 237–239 (NPA). Residues 259-279 (IFWVGPFIGAALAAIYHVVVI) form a helical membrane-spanning segment.

Belongs to the MIP/aquaporin (TC 1.A.8) family. PIP (TC 1.A.8.11) subfamily. In terms of tissue distribution, expressed in roots and leaves.

Its subcellular location is the cell membrane. In terms of biological role, water channel required to facilitate the transport of water across cell membrane. Increases the capacity for root water uptake under water deficit. May play a role in drought avoidance in upland rice. The sequence is that of Aquaporin PIP 1-3 (PIP1-3) from Oryza sativa subsp. japonica (Rice).